Reading from the N-terminus, the 24-residue chain is Unknown protein 6 (24 aa).

In Lonomia obliqua (Moth), this protein is Unknown protein 6.